The chain runs to 347 residues: GMP reductase (347 aa).

108–131 (ADFEKTVQILALNPALNFVCIDVA) contacts NADP(+). K(+)-binding residues include Gly181 and Gly183. The Thioimidate intermediate role is filled by Cys186. NADP(+) is bound at residue 216–239 (IVSDGGCTMPGDVAKAFGGGADFV).

The protein belongs to the IMPDH/GMPR family. GuaC type 1 subfamily. As to quaternary structure, homotetramer.

It catalyses the reaction IMP + NH4(+) + NADP(+) = GMP + NADPH + 2 H(+). Its function is as follows. Catalyzes the irreversible NADPH-dependent deamination of GMP to IMP. It functions in the conversion of nucleobase, nucleoside and nucleotide derivatives of G to A nucleotides, and in maintaining the intracellular balance of A and G nucleotides. This chain is GMP reductase, found in Salmonella paratyphi A (strain ATCC 9150 / SARB42).